A 590-amino-acid chain; its full sequence is UvrABC system protein C (590 aa).

The 78-residue stretch at 14 to 91 (DQPGCYLMKD…IKKYDPKYNV (78 aa)) folds into the GIY-YIG domain. In terms of domain architecture, UVR spans 196–231 (NEIKKELEAKMAEAAEKLEFERAKEFRDQLAHIEST).

This sequence belongs to the UvrC family. As to quaternary structure, interacts with UvrB in an incision complex.

It is found in the cytoplasm. Functionally, the UvrABC repair system catalyzes the recognition and processing of DNA lesions. UvrC both incises the 5' and 3' sides of the lesion. The N-terminal half is responsible for the 3' incision and the C-terminal half is responsible for the 5' incision. The sequence is that of UvrABC system protein C from Bacillus velezensis (strain DSM 23117 / BGSC 10A6 / LMG 26770 / FZB42) (Bacillus amyloliquefaciens subsp. plantarum).